Here is a 472-residue protein sequence, read N- to C-terminus: Protein translocase subunit SecD (472 aa).

The next 6 membrane-spanning stretches (helical) occupy residues 7–27, 298–318, 326–345, 349–368, 392–414, and 432–452; these read LLLL…KLPL, LVAG…YYRL, SLMI…GVTL, GIAG…VLIF, AFSS…FWFG, and SLFT…LSLP.

This sequence belongs to the SecD/SecF family. SecD subfamily. As to quaternary structure, forms a complex with SecF. Part of the essential Sec protein translocation apparatus which comprises SecA, SecYEG and auxiliary proteins SecDF. Other proteins may also be involved.

It localises to the cell inner membrane. In terms of biological role, part of the Sec protein translocase complex. Interacts with the SecYEG preprotein conducting channel. SecDF uses the proton motive force (PMF) to complete protein translocation after the ATP-dependent function of SecA. Its function is as follows. Probably participates in protein translocation into and across both the cytoplasmic and thylakoid membranes in cyanobacterial cells. The polypeptide is Protein translocase subunit SecD (Synechocystis sp. (strain ATCC 27184 / PCC 6803 / Kazusa)).